Here is a 1116-residue protein sequence, read N- to C-terminus: uncharacterized protein (1116 aa).

The helical transmembrane segment at 3-20 threads the bilayer; it reads FFLTFLLFLFTLFSLFVY.

It localises to the membrane. This is an uncharacterized protein from Aquifex aeolicus (strain VF5).